A 256-amino-acid chain; its full sequence is Putative cysteine-rich repeat secretory protein 21 (256 aa).

The signal sequence occupies residues 1–30; it reads MYSSVSKRLVSVHILVVVALQLLFIPNVLS. 2 Gnk2-homologous domains span residues 37-139 and 145-253; these read YLHH…SIDT and YQNN…LYPF.

This sequence belongs to the cysteine-rich repeat secretory protein family.

It localises to the secreted. The polypeptide is Putative cysteine-rich repeat secretory protein 21 (CRRSP21) (Arabidopsis thaliana (Mouse-ear cress)).